The chain runs to 513 residues: MEEYEAQLLVVEQALENAADEAQRQDLLALKNNLQELLALTRDTEDGAPTDELPQQGDDLDDELQRLRSELNDLEAAGSSQTALDEERQLADLRTKYTAMVGEKCSAPHEHSWGTCYHNALICGVDDEVVMSSEGVLDARLRVLFTNPTHREMLPCSYYLEGECRFDETKCRFSHGALVTGSSIRKYNPPDFHKLCRSRPVFALLPDRLWHRGRVLCVNFVEQVCRVRLDGQDHKERERDFKFEELYPLTTDQEEDDELSSEESNSSMNNESSDEAESDMDDLEEARRARMVELSLFTFKPTERLGAWEEFTRGIGSKLMEKMGYIHGTGLGSDGRGIVTPVSAQILPQGRSLDACMELREAANGDKDYFSVERKLKRAQRRQRKADEKAYVRESQRVDVFTFLNDSVLAPGESSQQGEQVAKKVKTNELQQHSTKTLNVETVRIADEIRRKQRDMAKVKQSLDRNSGDAQLQKRLQVQMQSHKQELATLQAQERSLSKEQQTRKSKNKMFEF.

A C3H1-type zinc finger spans residues 155–178 (PCSYYLEGECRFDETKCRFSHGAL). The segment covering 252 to 261 (DQEEDDELSS) has biased composition (acidic residues). The interval 252–282 (DQEEDDELSSEESNSSMNNESSDEAESDMDD) is disordered. The span at 262 to 271 (EESNSSMNNE) shows a compositional bias: low complexity. Residues 272 to 282 (SSDEAESDMDD) are compositionally biased toward acidic residues. The region spanning 312–358 (TRGIGSKLMEKMGYIHGTGLGSDGRGIVTPVSAQILPQGRSLDACME) is the G-patch domain. The span at 478 to 495 (VQMQSHKQELATLQAQER) shows a compositional bias: polar residues. The tract at residues 478–513 (VQMQSHKQELATLQAQERSLSKEQQTRKSKNKMFEF) is disordered. Positions 496-513 (SLSKEQQTRKSKNKMFEF) are enriched in basic and acidic residues.

Its subcellular location is the nucleus. Transcription repressor. The chain is Zinc finger CCCH-type with G patch domain-containing protein from Drosophila erecta (Fruit fly).